The sequence spans 254 residues: Ribosomal protein L11 methyltransferase (254 aa).

Thr107, Gly128, Asp149, Ser175, and Asn191 together coordinate S-adenosyl-L-methionine.

The protein belongs to the methyltransferase superfamily. PrmA family.

Its subcellular location is the cytoplasm. The catalysed reaction is L-lysyl-[protein] + 3 S-adenosyl-L-methionine = N(6),N(6),N(6)-trimethyl-L-lysyl-[protein] + 3 S-adenosyl-L-homocysteine + 3 H(+). The enzyme catalyses an N-terminal L-alpha-aminoacyl-[protein] + 3 S-adenosyl-L-methionine = an N-terminal trimethyl-L-alpha-aminoacyl-[protein] + 3 S-adenosyl-L-homocysteine + 3 H(+). Its function is as follows. Methylates ribosomal protein L11. Preferentially recognizes free L11 before its incorporation into 50S subunits. This function is dispensable for growth and thermostability. This chain is Ribosomal protein L11 methyltransferase, found in Thermus thermophilus (strain ATCC 27634 / DSM 579 / HB8).